The sequence spans 87 residues: Cell division topological specificity factor (87 aa).

It belongs to the MinE family.

Its function is as follows. Prevents the cell division inhibition by proteins MinC and MinD at internal division sites while permitting inhibition at polar sites. This ensures cell division at the proper site by restricting the formation of a division septum at the midpoint of the long axis of the cell. The sequence is that of Cell division topological specificity factor from Delftia acidovorans (strain DSM 14801 / SPH-1).